A 470-amino-acid chain; its full sequence is Glycine--tRNA ligase (470 aa).

Residues Arg-94 and Glu-183 each contribute to the substrate site. ATP is bound by residues 215–217, 225–230, 298–299, and 342–345; these read RNE, FRMVEF, EI, and GCDR. 230 to 234 lines the substrate pocket; that stretch reads FEQME. 338-342 lines the substrate pocket; sequence ETSSG.

It belongs to the class-II aminoacyl-tRNA synthetase family. Homodimer.

It is found in the cytoplasm. It carries out the reaction tRNA(Gly) + glycine + ATP = glycyl-tRNA(Gly) + AMP + diphosphate. Functionally, catalyzes the attachment of glycine to tRNA(Gly). This chain is Glycine--tRNA ligase, found in Chlorobaculum tepidum (strain ATCC 49652 / DSM 12025 / NBRC 103806 / TLS) (Chlorobium tepidum).